The sequence spans 181 residues: UPF0301 protein MXAN_2022 (181 aa).

This sequence belongs to the UPF0301 (AlgH) family.

In Myxococcus xanthus (strain DK1622), this protein is UPF0301 protein MXAN_2022.